A 173-amino-acid polypeptide reads, in one-letter code: Alpha-crystallin A chain (173 aa).

Met-1 carries the post-translational modification N-acetylmethionine. A required for complex formation with BFSP1 and BFSP2 region spans residues 1-63 (MDIAIQHPWF…RTVLDSGVSE (63 aa)). Gln-6 bears the Deamidated glutamine; partial mark. Ser-45 is modified (phosphoserine). Gln-50 is subject to Deamidated glutamine; partial. The region spanning 52 to 162 (LFRTVLDSGV…GHSERAIPVS (111 aa)) is the sHSP domain. N6-acetyllysine is present on Lys-70. His-79 is a binding site for Zn(2+). Position 90 is a deamidated glutamine; partial (Gln-90). Lys-99 is subject to N6-acetyllysine. His-100 serves as a coordination point for Zn(2+). A Deamidated asparagine; partial modification is found at Asn-101. Zn(2+)-binding residues include Glu-102 and His-107. Ser-122 is modified (phosphoserine). Asn-123 is subject to Deamidated asparagine; partial. The interval 144-173 (PKVPSGVDAGHSERAIPVSREEKPSSAPTS) is disordered. Residues 153 to 167 (GHSERAIPVSREEKP) show a composition bias toward basic and acidic residues. His-154 lines the Zn(2+) pocket. Ser-162 carries O-linked (GlcNAc) serine glycosylation.

The protein belongs to the small heat shock protein (HSP20) family. As to quaternary structure, heteromer composed of three CRYAA and one CRYAB subunits. Inter-subunit bridging via zinc ions enhances stability, which is crucial as there is no protein turn over in the lens. Can also form homodimers and homotetramers (dimers of dimers) which serve as the building blocks of homooligomers. Within homooligomers, the zinc-binding motif is created from residues of 3 different molecules. His-100 and Glu-102 from one molecule are ligands of the zinc ion, and His-107 and His-154 residues from additional molecules complete the site with tetrahedral coordination geometry. Part of a complex required for lens intermediate filament formation composed of BFSP1, BFSP2 and CRYAA. In terms of processing, acetylation at Lys-70 may increase chaperone activity. Post-translationally, undergoes age-dependent proteolytical cleavage at the C-terminus.

The protein localises to the cytoplasm. It localises to the nucleus. Its function is as follows. Contributes to the transparency and refractive index of the lens. Acts as a chaperone, preventing aggregation of various proteins under a wide range of stress conditions. Required for the correct formation of lens intermediate filaments as part of a complex composed of BFSP1, BFSP2 and CRYAA. This chain is Alpha-crystallin A chain (CRYAA), found in Sus scrofa (Pig).